An 85-amino-acid chain; its full sequence is UPF0473 protein CLK_1946 (85 aa).

It belongs to the UPF0473 family.

This chain is UPF0473 protein CLK_1946, found in Clostridium botulinum (strain Loch Maree / Type A3).